The sequence spans 129 residues: Small ribosomal subunit protein uS11 (129 aa).

The protein belongs to the universal ribosomal protein uS11 family. As to quaternary structure, part of the 30S ribosomal subunit. Interacts with proteins S7 and S18. Binds to IF-3.

Its function is as follows. Located on the platform of the 30S subunit, it bridges several disparate RNA helices of the 16S rRNA. Forms part of the Shine-Dalgarno cleft in the 70S ribosome. This is Small ribosomal subunit protein uS11 from Rhodopseudomonas palustris (strain HaA2).